Consider the following 631-residue polypeptide: MKTYESNEYDVIVVGAGHAGVEAALAAARMGEKTLLLTINLDMVAFMPCNPSVGGPAKGTVVREIDALGGEMGKNIDATYIQMRMLNTGKGPAVRALRAQADKWQYHEHMKDTIENEPNLTLRQAVADELIVEDGACKGLITNTGAKYHAKSVVLTTGTAARGKIIIGELTYSSGPNNSLPSIKLPENLEKLGFKLRRFKTGTPPRVDGNTVDYSKTQEEPGDKEPRHFSYTSKDSDYLKDQMSCYMTYTNTVTHDIIRANLDRAPMFSGVIKGVGPRYCPSIEDKVVRFADKDRHQIFLEPEGRNTKEIYVGDFSTSMPEEVQLKMLHSVAGLEKAELMRPGYAIEYDVIEPWQLKHTLETKNIKHLFTAGQMNGTSGYEEAAGQGLIAGINAALSAQNKPGFTLQRDEAYIGVLIDDLVTKGTNEPYRLLTSRAEYRLLLRHDNADLRLTEKGHELGLISEERYAKFEAKKQAISRAMAAIKKVTIHPTDEVQEYLASVKQDRLNAGVSGADFLKRPRVTFDAVEKLSGQTLATDRYVKEQVEIALKYEGYIKKEKTLVDRLHRLESKKIPVDIDYNAIPSLATEARQKFEKIRPESIAQAERISGVNPADLAILTAYIQQGRIAKIKK.

Position 15–20 (15–20) interacts with FAD; the sequence is GAGHAG. The disordered stretch occupies residues 203-232; it reads TPPRVDGNTVDYSKTQEEPGDKEPRHFSYT. Residues 216–232 show a composition bias toward basic and acidic residues; the sequence is KTQEEPGDKEPRHFSYT. 276 to 290 is a binding site for NAD(+); sequence GPRYCPSIEDKVVRF.

It belongs to the MnmG family. Homodimer. Heterotetramer of two MnmE and two MnmG subunits. FAD is required as a cofactor.

It localises to the cytoplasm. NAD-binding protein involved in the addition of a carboxymethylaminomethyl (cmnm) group at the wobble position (U34) of certain tRNAs, forming tRNA-cmnm(5)s(2)U34. In Lactobacillus gasseri (strain ATCC 33323 / DSM 20243 / BCRC 14619 / CIP 102991 / JCM 1131 / KCTC 3163 / NCIMB 11718 / NCTC 13722 / AM63), this protein is tRNA uridine 5-carboxymethylaminomethyl modification enzyme MnmG.